Here is a 319-residue protein sequence, read N- to C-terminus: Homoserine dehydrogenase (319 aa).

Residues Phe10, Thr12, Val13, Arg40, Lys57, Ser92, Ser93, Ser114, and Lys116 each coordinate NADPH. Val13 serves as a coordination point for NAD(+). Positions 13 and 40 each coordinate NADP(+). An NAD(+)-binding site is contributed by Ser92. Residue Ser92 participates in NADP(+) binding. Residues Ser114 and Lys116 each contribute to the NADP(+) site. 4 residues coordinate Na(+): Glu140, Val143, Ala145, and Thr147. NADP(+)-binding residues include Gly197 and Glu200. Residues Glu200 and Asp211 each coordinate L-homoserine. Lys215 acts as the Proton donor in catalysis. Position 296 (Gly296) interacts with NADPH. Gly296 serves as a coordination point for NAD(+). Residue Gly296 participates in NADP(+) binding.

The protein belongs to the homoserine dehydrogenase family. In terms of assembly, homodimer. It depends on a metal cation as a cofactor.

It catalyses the reaction L-homoserine + NAD(+) = L-aspartate 4-semialdehyde + NADH + H(+). The protein operates within amino-acid biosynthesis; L-methionine biosynthesis via de novo pathway; L-homoserine from L-aspartate: step 3/3. It functions in the pathway amino-acid biosynthesis; L-threonine biosynthesis; L-threonine from L-aspartate: step 3/5. Functionally, catalyzes the conversion of L-aspartate-beta-semialdehyde (L-Asa) to L-homoserine (L-Hse), the third step in the biosynthesis of threonine and methionine from aspartate. Utilizes NADH but not NADPH as coenzyme. The sequence is that of Homoserine dehydrogenase from Pyrococcus horikoshii (strain ATCC 700860 / DSM 12428 / JCM 9974 / NBRC 100139 / OT-3).